The sequence spans 295 residues: Glucose-1-phosphate thymidylyltransferase (295 aa).

Asp111 and Asp226 together coordinate Mg(2+).

The protein belongs to the glucose-1-phosphate thymidylyltransferase family. As to quaternary structure, homotetramer. The cofactor is Mg(2+).

The catalysed reaction is dTTP + alpha-D-glucose 1-phosphate + H(+) = dTDP-alpha-D-glucose + diphosphate. It participates in carbohydrate biosynthesis; dTDP-L-rhamnose biosynthesis. The protein operates within bacterial outer membrane biogenesis; LPS O-antigen biosynthesis. Its function is as follows. Catalyzes the formation of dTDP-glucose, from dTTP and glucose 1-phosphate, as well as its pyrophosphorolysis. This chain is Glucose-1-phosphate thymidylyltransferase (rmlA), found in Xanthomonas campestris pv. campestris (strain B100).